The chain runs to 316 residues: tRNA methyltransferase 10 homolog B (316 aa).

The stretch at 73–98 (EKIVAAKKSKRKQEKERRKANRVENS) forms a coiled coil. The interval 77–96 (AAKKSKRKQEKERRKANRVE) is disordered. One can recognise an SAM-dependent MTase TRM10-type domain in the interval 113 to 310 (IKERLLEAKH…KGVSSRKGYV (198 aa)).

It belongs to the class IV-like SAM-binding methyltransferase superfamily. TRM10 family.

The enzyme catalyses guanosine(9) in tRNA + S-adenosyl-L-methionine = N(1)-methylguanosine(9) in tRNA + S-adenosyl-L-homocysteine + H(+). Functionally, S-adenosyl-L-methionine-dependent guanine N(1)-methyltransferase that catalyzes the formation of N(1)-methylguanine at position 9 (m1G9) in tRNAs. Probably not able to catalyze formation of N(1)-methyladenine at position 9 (m1A9) in tRNAs. In Bos taurus (Bovine), this protein is tRNA methyltransferase 10 homolog B (TRMT10B).